We begin with the raw amino-acid sequence, 1462 residues long: Iron-sulfur cluster assembly protein SufD (1462 aa).

Disordered stretches follow at residues 500-525, 938-970, and 1111-1153; these read IDNN…DNPY, NQNK…GTEQ, and NIPS…EKEE. Residues 510 to 523 are compositionally biased toward low complexity; it reads NNNNNNNNNNNCDN. The span at 961 to 970 shows a compositional bias: basic and acidic residues; the sequence is HIQDEQGTEQ. The segment covering 1111–1136 has biased composition (low complexity); sequence NIPSNNKQTNSNNNSEYNNEQNNCSN.

This sequence belongs to the iron-sulfur cluster assembly SufBD family. Component of a complex composed of SufB, SufC and SufD in a stoichiometric ratio of 1:2:1. Interacts with SufB. Interacts with SufC; the interaction enhances the ATPase activity of SufC. In terms of processing, proteolytically cleaved.

The protein resides in the plastid. The protein localises to the apicoplast. The protein operates within cofactor biosynthesis; iron-sulfur cluster biosynthesis. In terms of biological role, participates in the sulfur mobilization (SUF) pathway for iron-sulfur (Fe-S) cluster biogenesis. As part of a complex consisting of SufB-SufC(2)-SufD, involved in assembly of [4Fe-4S] clusters. Enhances the ATPase activity of SufC. This chain is Iron-sulfur cluster assembly protein SufD, found in Plasmodium falciparum (isolate 3D7).